A 305-amino-acid polypeptide reads, in one-letter code: tRNA uridine(34) hydroxylase (305 aa).

Positions Ser-126 to Ser-220 constitute a Rhodanese domain. The active-site Cysteine persulfide intermediate is Cys-180.

It belongs to the TrhO family.

The enzyme catalyses uridine(34) in tRNA + AH2 + O2 = 5-hydroxyuridine(34) in tRNA + A + H2O. In terms of biological role, catalyzes oxygen-dependent 5-hydroxyuridine (ho5U) modification at position 34 in tRNAs. The chain is tRNA uridine(34) hydroxylase from Trichormus variabilis (strain ATCC 29413 / PCC 7937) (Anabaena variabilis).